Here is a 287-residue protein sequence, read N- to C-terminus: Large ribosomal subunit protein uL2 (287 aa).

A disordered region spans residues 221-287 (RGSVMNPCDH…SKRSRGGRDS (67 aa)). Over residues 258–287 (KTRKRNKPSNRFVLRKRRRVSKRSRGGRDS) the composition is skewed to basic residues.

The protein belongs to the universal ribosomal protein uL2 family. Part of the 50S ribosomal subunit. Forms a bridge to the 30S subunit in the 70S ribosome.

Its function is as follows. One of the primary rRNA binding proteins. Required for association of the 30S and 50S subunits to form the 70S ribosome, for tRNA binding and peptide bond formation. It has been suggested to have peptidyltransferase activity; this is somewhat controversial. Makes several contacts with the 16S rRNA in the 70S ribosome. The polypeptide is Large ribosomal subunit protein uL2 (Prochlorococcus marinus (strain SARG / CCMP1375 / SS120)).